Reading from the N-terminus, the 193-residue chain is Bradykinin-potentiating and C-type natriuretic peptides (193 aa).

The signal sequence occupies residues 1 to 23; that stretch reads MFVSRLAASGLLLLALLALSLDG. The propeptide occupies 24-27; sequence KPVH. A disordered region spans residues 25–173; sequence PVHQSKPGRS…RMKGLAKKAM (149 aa). Glutamine 28 carries the post-translational modification Pyrrolidone carboxylic acid. 2 consecutive propeptides follow at residues 40 to 43 and 58 to 64; these read LSAQ and LSVQQWS. Glutamine 65 is subject to Pyrrolidone carboxylic acid. The propeptide occupies 75–169; the sequence is VVVQPHESPA…GGARRMKGLA (95 aa). Low complexity predominate over residues 95-123; sequence SPGPEAASGPAAPHRLPKSKGASATSAAS. A compositionally biased stretch (basic and acidic residues) spans 125-150; that stretch reads PMRDLRTDGKQERQKWGRMVQPDHHA. Residues 152-162 show a composition bias toward gly residues; the sequence is PGGGGGGGGGA. A compositionally biased stretch (basic residues) spans 163–173; that stretch reads RRMKGLAKKAM. Cysteine 177 and cysteine 193 form a disulfide bridge.

In the N-terminal section; belongs to the bradykinin-potentiating peptide family. The protein in the C-terminal section; belongs to the natriuretic peptide family. As to expression, expressed by the venom gland.

It localises to the secreted. Bradykinin-potentiating peptide both inhibits the activity of the angiotensin-converting enzyme (ACE) and enhances the action of bradykinin by inhibiting the peptidases that inactivate it. It acts as an indirect hypotensive agent. Neither synthetic Tf1, nor synthetic Tf2 show bradykinin-potentiating effects. In terms of biological role, has a vasorelaxant activity in rat aortic strips and a diuretic potency in anesthetized rats. Its function is as follows. Has a vasorelaxant activity in rat aortic strips and a diuretic potency in anesthetized rats. Is as potent as Tf-CNP. The polypeptide is Bradykinin-potentiating and C-type natriuretic peptides (Protobothrops flavoviridis (Habu)).